The sequence spans 296 residues: GTPase Era (296 aa).

Residues 3-170 enclose the Era-type G domain; sequence KSGFVTIVGR…KELMFKYIPE (168 aa). Residues 11-18 form a G1 region; the sequence is GRPNVGKS. 11–18 serves as a coordination point for GTP; it reads GRPNVGKS. A G2 region spans residues 37–41; it reads QTTRN. Positions 58–61 are G3; sequence DTPG. Residues 58 to 62 and 120 to 123 contribute to the GTP site; these read DTPGI and NKID. A G4 region spans residues 120–123; it reads NKID. A G5 region spans residues 149 to 151; sequence ISA. The KH type-2 domain maps to 201–278; it reads LSEEVPHGIA…YIRLWVKVKE (78 aa).

This sequence belongs to the TRAFAC class TrmE-Era-EngA-EngB-Septin-like GTPase superfamily. Era GTPase family. Monomer.

It localises to the cytoplasm. Its subcellular location is the cell membrane. In terms of biological role, an essential GTPase that binds both GDP and GTP, with rapid nucleotide exchange. Plays a role in 16S rRNA processing and 30S ribosomal subunit biogenesis and possibly also in cell cycle regulation and energy metabolism. The sequence is that of GTPase Era from Clostridium botulinum (strain Loch Maree / Type A3).